The sequence spans 222 residues: Large ribosomal subunit protein uL4 (222 aa).

It belongs to the universal ribosomal protein uL4 family. As to quaternary structure, part of the 50S ribosomal subunit.

One of the primary rRNA binding proteins, this protein initially binds near the 5'-end of the 23S rRNA. It is important during the early stages of 50S assembly. It makes multiple contacts with different domains of the 23S rRNA in the assembled 50S subunit and ribosome. In terms of biological role, forms part of the polypeptide exit tunnel. This Methylacidiphilum infernorum (isolate V4) (Methylokorus infernorum (strain V4)) protein is Large ribosomal subunit protein uL4.